We begin with the raw amino-acid sequence, 139 residues long: Acyl carrier protein 5, chloroplastic (139 aa).

Residues 1 to 54 (MATSFCSSISMQAPFSATTTRFCLNKQATIFNNEKTNNLSFSLRRLMPARLAVS) constitute a chloroplast transit peptide. Residues 59-134 (QETVEKVSEI…QAAELIEELV (76 aa)) enclose the Carrier domain. Residue Ser94 is modified to O-(pantetheine 4'-phosphoryl)serine.

The protein belongs to the acyl carrier protein (ACP) family. In terms of processing, 4'-phosphopantetheine is transferred from CoA to a specific serine of apo-ACP by acpS. This modification is essential for activity because fatty acids are bound in thioester linkage to the sulfhydryl of the prosthetic group.

The protein localises to the plastid. Its subcellular location is the chloroplast. In terms of biological role, carrier of the growing fatty acid chain in fatty acid biosynthesis. In Arabidopsis thaliana (Mouse-ear cress), this protein is Acyl carrier protein 5, chloroplastic (ACP5).